Reading from the N-terminus, the 119-residue chain is Large ribosomal subunit protein bL20 (119 aa).

This sequence belongs to the bacterial ribosomal protein bL20 family.

Binds directly to 23S ribosomal RNA and is necessary for the in vitro assembly process of the 50S ribosomal subunit. It is not involved in the protein synthesizing functions of that subunit. This is Large ribosomal subunit protein bL20 from Nitrosospira multiformis (strain ATCC 25196 / NCIMB 11849 / C 71).